Reading from the N-terminus, the 483-residue chain is Essential nuclear protein 1 (483 aa).

4 disordered regions span residues 1 to 21 (MARA…LKDL), 33 to 55 (KKKL…GYID), 67 to 123 (KEQQ…EGDY), and 171 to 200 (ESQV…GLKS). Residues 96 to 123 (YDDEDEDEDEDEEAFGEDISDFEPEGDY) show a composition bias toward acidic residues. Serine 172 carries the post-translational modification Phosphoserine; by ATM or ATR. Residues 174–183 (VEDMQDDEPL) show a composition bias toward acidic residues. Residues 185-198 (NEQNTSRGNISSGL) are compositionally biased toward polar residues. 2 positions are modified to phosphoserine: serine 190 and serine 404.

The protein belongs to the bystin family.

Its subcellular location is the cytoplasm. It is found in the nucleus. The protein resides in the nucleolus. Functionally, required for normal export of the pre-40S particles from the nucleus to the cytoplasm. Its subcellular location and association with pre-40S subunit shifts from mixed cytoplasm/nucleus to all nuclear in RPS19 disruptions, suggesting it acts after the ribosomal protein. This chain is Essential nuclear protein 1 (ENP1), found in Saccharomyces cerevisiae (strain ATCC 204508 / S288c) (Baker's yeast).